A 370-amino-acid polypeptide reads, in one-letter code: tRNA 2-selenouridine synthase (370 aa).

The region spanning 12–136 (FLEDVPMMDT…MRNFLLDTTR (125 aa)) is the Rhodanese domain. Catalysis depends on cysteine 95, which acts as the S-selanylcysteine intermediate.

This sequence belongs to the SelU family. As to quaternary structure, monomer.

It catalyses the reaction 5-methylaminomethyl-2-thiouridine(34) in tRNA + selenophosphate + (2E)-geranyl diphosphate + H2O + H(+) = 5-methylaminomethyl-2-selenouridine(34) in tRNA + (2E)-thiogeraniol + phosphate + diphosphate. The enzyme catalyses 5-methylaminomethyl-2-thiouridine(34) in tRNA + (2E)-geranyl diphosphate = 5-methylaminomethyl-S-(2E)-geranyl-thiouridine(34) in tRNA + diphosphate. The catalysed reaction is 5-methylaminomethyl-S-(2E)-geranyl-thiouridine(34) in tRNA + selenophosphate + H(+) = 5-methylaminomethyl-2-(Se-phospho)selenouridine(34) in tRNA + (2E)-thiogeraniol. It carries out the reaction 5-methylaminomethyl-2-(Se-phospho)selenouridine(34) in tRNA + H2O = 5-methylaminomethyl-2-selenouridine(34) in tRNA + phosphate. Involved in the post-transcriptional modification of the uridine at the wobble position (U34) of tRNA(Lys), tRNA(Glu) and tRNA(Gln). Catalyzes the conversion of 2-thiouridine (S2U-RNA) to 2-selenouridine (Se2U-RNA). Acts in a two-step process involving geranylation of 2-thiouridine (S2U) to S-geranyl-2-thiouridine (geS2U) and subsequent selenation of the latter derivative to 2-selenouridine (Se2U) in the tRNA chain. The polypeptide is tRNA 2-selenouridine synthase (Azotobacter vinelandii (strain DJ / ATCC BAA-1303)).